Reading from the N-terminus, the 587-residue chain is 5-aminolevulinate synthase, erythroid-specific, mitochondrial (587 aa).

A mitochondrion-targeting transit peptide spans 1–49 (MVTAAMLLQCCPVPARGPTSLLGKVVKTHQFLFGIGRCPILATQGPNCS). Position 163 (arginine 163) interacts with succinyl-CoA. Residues cysteine 258 and phenylalanine 259 each coordinate pyridoxal 5'-phosphate. Serine 280 and lysine 299 together coordinate succinyl-CoA. Positions 332, 360, and 388 each coordinate pyridoxal 5'-phosphate. Residue lysine 391 is part of the active site. At lysine 391 the chain carries N6-(pyridoxal phosphate)lysine. Positions 420 and 421 each coordinate pyridoxal 5'-phosphate. A succinyl-CoA-binding site is contributed by threonine 508.

It belongs to the class-II pyridoxal-phosphate-dependent aminotransferase family. As to quaternary structure, homodimer. Interacts with SUCLA2. It depends on pyridoxal 5'-phosphate as a cofactor.

The protein localises to the mitochondrion inner membrane. It catalyses the reaction succinyl-CoA + glycine + H(+) = 5-aminolevulinate + CO2 + CoA. The protein operates within porphyrin-containing compound metabolism; protoporphyrin-IX biosynthesis; 5-aminolevulinate from glycine: step 1/1. Functionally, catalyzes the pyridoxal 5'-phosphate (PLP)-dependent condensation of succinyl-CoA and glycine to form aminolevulinic acid (ALA), with CoA and CO2 as by-products. Contributes significantly to heme formation during erythropoiesis. This is 5-aminolevulinate synthase, erythroid-specific, mitochondrial (ALAS2) from Pongo abelii (Sumatran orangutan).